The following is a 437-amino-acid chain: uncharacterized protein (437 aa).

The next 2 membrane-spanning stretches (helical) occupy residues 102–122 (GIYMCYFLTVYLLLYPSPVII) and 272–292 (ILSISVLACVVRVPILSATVW).

This sequence belongs to the herpesviridae UL49 family.

It localises to the host membrane. This is an uncharacterized protein from Connochaetes taurinus (Blue wildebeest).